An 831-amino-acid polypeptide reads, in one-letter code: ATP-dependent RNA helicase DBP7 (831 aa).

Positions 65-75 are enriched in polar residues; sequence ATDVNRTQLGQ. The segment at 65–180 is disordered; it reads ATDVNRTQLG…EPIEPSNAPL (116 aa). The span at 82–112 shows a compositional bias: basic and acidic residues; the sequence is KSPEVHEDIDRPAKRARVSGDFRPKSNEKSA. Residues 146-162 are compositionally biased toward polar residues; sequence VISSLFTYNPTSTTKTQ. A Q motif motif is present at residues 185 to 214; that stretch reads DTFTSLGISTTLAAHLLKKMDLKAPTAIQK. The Helicase ATP-binding domain maps to 218 to 419; the sequence is TQLVKDDSDA…QISLKDAVHL (202 aa). ATP is bound at residue 231 to 238; that stretch reads AETGSGKT. The DEAD box signature appears at 353–356; the sequence is DEGD. 2 disordered regions span residues 419 to 441 and 501 to 543; these read LRAD…SYAP and KNEK…SVTH. A Helicase C-terminal domain is found at 456 to 670; that stretch reads RLVSLIAYLK…ITRQDADDIL (215 aa). The span at 501–512 shows a compositional bias: basic and acidic residues; it reads KNEKAEGTKDDT.

It belongs to the DEAD box helicase family. DDX31/DBP7 subfamily.

The protein resides in the nucleus. It localises to the nucleolus. It catalyses the reaction ATP + H2O = ADP + phosphate + H(+). Functionally, ATP-binding RNA helicase involved in the biogenesis of 60S ribosomal subunits and is required for the normal formation of 25S and 5.8S rRNAs. The polypeptide is ATP-dependent RNA helicase DBP7 (DBP7) (Phaeosphaeria nodorum (strain SN15 / ATCC MYA-4574 / FGSC 10173) (Glume blotch fungus)).